The primary structure comprises 744 residues: Tripartite motif-containing protein 2 (744 aa).

A Phosphoserine modification is found at serine 10. An RING-type zinc finger spans residues 23–64; sequence CSICLERYKNPKVLPCLHTFCERCLQNYIPAHSLTLSCPVCR. The B box-type zinc-finger motif lies at 113 to 154; the sequence is GKPLSCPNHDGNVMEFYCQSCETAMCRECTEGEHAEHPTVPL. Positions 118, 121, 141, and 146 each coordinate Zn(2+). Residues 320-421 form a Filamin repeat; the sequence is TTNAVASETV…IRGSPFKLKV (102 aa). A Phosphothreonine modification is found at threonine 371. Phosphoserine is present on residues serine 375, serine 424, and serine 428. The tract at residues 432 to 462 is disordered; it reads EGVKRRVKSPGSGHVKQKAVKRPASMYSTGK. 6 NHL repeats span residues 473–516, 520–563, 564–605, 609–652, 656–699, and 700–743; these read IFRV…FSND, KSRF…FSSD, GKFK…FQPN, VTRF…FNQE, MLKF…FDGS, and GSFL…YRYL.

The protein belongs to the TRIM/RBCC family. In terms of assembly, forms homooligomers. Interacts with TRIM3; this interaction reduces TRIM2 activity. Interacts with myosin V; myosin V may not be a substrate for ubiquitination. Interacts with NEFL. Interacts with phosphorylated BCL2L11. Interacts with SIRPA. Post-translationally, RING-type zinc finger-dependent and UBE2D1-dependent autoubiquitination.

It localises to the cytoplasm. The catalysed reaction is S-ubiquitinyl-[E2 ubiquitin-conjugating enzyme]-L-cysteine + [acceptor protein]-L-lysine = [E2 ubiquitin-conjugating enzyme]-L-cysteine + N(6)-ubiquitinyl-[acceptor protein]-L-lysine.. It functions in the pathway protein modification; protein ubiquitination. UBE2D1-dependent E3 ubiquitin-protein ligase that mediates the ubiquitination of NEFL and of phosphorylated BCL2L11. Plays a neuroprotective function. May play a role in neuronal rapid ischemic tolerance. Plays a role in antiviral immunity and limits New World arenavirus infection independently of its ubiquitin ligase activity. The protein is Tripartite motif-containing protein 2 (TRIM2) of Homo sapiens (Human).